A 212-amino-acid polypeptide reads, in one-letter code: ATP-dependent dethiobiotin synthetase BioD (212 aa).

13-18 (GIGKTV) contacts ATP. Threonine 17 is a Mg(2+) binding site. Lysine 33 is a catalytic residue. Serine 37 is a substrate binding site. Mg(2+) is bound at residue glutamate 100. ATP contacts are provided by residues 100-103 (EGAG) and 184-186 (PRL).

Belongs to the dethiobiotin synthetase family. As to quaternary structure, homodimer. Requires Mg(2+) as cofactor.

It localises to the cytoplasm. The catalysed reaction is (7R,8S)-7,8-diammoniononanoate + CO2 + ATP = (4R,5S)-dethiobiotin + ADP + phosphate + 3 H(+). Its pathway is cofactor biosynthesis; biotin biosynthesis; biotin from 7,8-diaminononanoate: step 1/2. In terms of biological role, catalyzes a mechanistically unusual reaction, the ATP-dependent insertion of CO2 between the N7 and N8 nitrogen atoms of 7,8-diaminopelargonic acid (DAPA, also called 7,8-diammoniononanoate) to form a ureido ring. In Brucella anthropi (strain ATCC 49188 / DSM 6882 / CCUG 24695 / JCM 21032 / LMG 3331 / NBRC 15819 / NCTC 12168 / Alc 37) (Ochrobactrum anthropi), this protein is ATP-dependent dethiobiotin synthetase BioD.